Here is a 142-residue protein sequence, read N- to C-terminus: Putative pre-16S rRNA nuclease (142 aa).

The protein belongs to the YqgF nuclease family.

The protein resides in the cytoplasm. Its function is as follows. Could be a nuclease involved in processing of the 5'-end of pre-16S rRNA. The chain is Putative pre-16S rRNA nuclease from Lactobacillus acidophilus (strain ATCC 700396 / NCK56 / N2 / NCFM).